Consider the following 332-residue polypeptide: Transaldolase (332 aa).

The active-site Schiff-base intermediate with substrate is K136.

Belongs to the transaldolase family. Type 1 subfamily.

It is found in the cytoplasm. It carries out the reaction D-sedoheptulose 7-phosphate + D-glyceraldehyde 3-phosphate = D-erythrose 4-phosphate + beta-D-fructose 6-phosphate. The protein operates within carbohydrate degradation; pentose phosphate pathway; D-glyceraldehyde 3-phosphate and beta-D-fructose 6-phosphate from D-ribose 5-phosphate and D-xylulose 5-phosphate (non-oxidative stage): step 2/3. Functionally, transaldolase is important for the balance of metabolites in the pentose-phosphate pathway. This chain is Transaldolase, found in Nostoc sp. (strain PCC 7120 / SAG 25.82 / UTEX 2576).